The following is a 423-amino-acid chain: Histidine--tRNA ligase (423 aa).

This sequence belongs to the class-II aminoacyl-tRNA synthetase family. As to quaternary structure, homodimer.

The protein resides in the cytoplasm. The catalysed reaction is tRNA(His) + L-histidine + ATP = L-histidyl-tRNA(His) + AMP + diphosphate + H(+). This Rhodococcus jostii (strain RHA1) protein is Histidine--tRNA ligase.